A 63-amino-acid polypeptide reads, in one-letter code: Large ribosomal subunit protein uL29 (63 aa).

The protein belongs to the universal ribosomal protein uL29 family.

The protein is Large ribosomal subunit protein uL29 of Shewanella pealeana (strain ATCC 700345 / ANG-SQ1).